A 214-amino-acid polypeptide reads, in one-letter code: NADH-ubiquinone oxidoreductase chain 5 (214 aa).

4 consecutive transmembrane segments (helical) span residues 14-34 (LNTW…TYSI), 58-78 (PLIT…GMII), 92-112 (MPLI…ILAL), and 192-212 (TGLI…MILM).

This sequence belongs to the complex I subunit 5 family.

It is found in the mitochondrion inner membrane. The catalysed reaction is a ubiquinone + NADH + 5 H(+)(in) = a ubiquinol + NAD(+) + 4 H(+)(out). Its function is as follows. Core subunit of the mitochondrial membrane respiratory chain NADH dehydrogenase (Complex I) that is believed to belong to the minimal assembly required for catalysis. Complex I functions in the transfer of electrons from NADH to the respiratory chain. The immediate electron acceptor for the enzyme is believed to be ubiquinone. This is NADH-ubiquinone oxidoreductase chain 5 (MT-ND5) from Anser caerulescens (Snow goose).